The primary structure comprises 488 residues: MAGTLCVTLLLLLSTIAVGGRKTWRRRSQQIVPSSWERSEGGGESFPLDFTAVEGNMDNFMNQIKSLAQSLYPCSAQRLDDEMKLHSLHNKSVTCNDGSPAGYYLKESKGSRRWLVFLEGGWYCISRENCDIRYDTMRSLMSSRAWPPSKTASGILSTQPEENPHWWNANIVFIPYCSSDVWSGVSPKTEKSGYAFMGSLIIQEVVKELLGKGLDTAKLLLLAGSSAGGTGVLLNVDMVANLLEELGYPGIEVRGLSDSGWFLNNKQYWRTDCTDIITCAPTEAIQRGIRYWNSMVPERCKQQFKEGEEWNCFFGYKIYPTLRSPVFVVQWLFDEAQLTVDNVHLSRQPVQESQWLYIQNLGRELRNTLKDVGASFAPACLAHEVITRSHWTEIQVRGTSLPRALHCWDRSLQEPNKNSKVQLKGCPFHLMDSCPWPQCNPTCPSIRDHFTGQEMSVVQFLMHLGFDVQKMASQQGMEPGKLLGVLSS.

An N-terminal signal peptide occupies residues 1-19 (MAGTLCVTLLLLLSTIAVG). A glycan (N-linked (GlcNAc...) asparagine) is linked at Asn-90. Residues Ser-226, Asp-334, and His-383 each act as charge relay system in the active site.

Belongs to the pectinacetylesterase family. Notum subfamily. In terms of tissue distribution, expressed in the egg and through cleavage to gastrulation stages. Enriched in the animal (prospective ectoderm) and dorsal regions in early gastrula. Shows a dynamic expression during embryogenesis, in particular during neural induction and antero-posterior (AP) patterning.

It is found in the secreted. It catalyses the reaction [Wnt protein]-O-(9Z)-hexadecenoyl-L-serine + H2O = [Wnt protein]-L-serine + (9Z)-hexadecenoate + H(+). Carboxylesterase that acts as a key negative regulator of the Wnt signaling pathway by specifically mediating depalmitoleoylation of WNT proteins. Serine palmitoleoylation of WNT proteins is required for efficient binding to frizzled receptors. Functions in the prospective ectoderm and is required for neural induction. This chain is Palmitoleoyl-protein carboxylesterase notum1', found in Xenopus laevis (African clawed frog).